Consider the following 227-residue polypeptide: Ribose-5-phosphate isomerase A (227 aa).

Substrate contacts are provided by residues 26-29 (TGST), 82-85 (DGAD), and 95-98 (KGGG). Residue glutamate 104 is the Proton acceptor of the active site. Lysine 122 contributes to the substrate binding site.

The protein belongs to the ribose 5-phosphate isomerase family. Homodimer.

It carries out the reaction aldehydo-D-ribose 5-phosphate = D-ribulose 5-phosphate. It participates in carbohydrate degradation; pentose phosphate pathway; D-ribose 5-phosphate from D-ribulose 5-phosphate (non-oxidative stage): step 1/1. Catalyzes the reversible conversion of ribose-5-phosphate to ribulose 5-phosphate. This is Ribose-5-phosphate isomerase A from Streptococcus pneumoniae (strain ATCC 700669 / Spain 23F-1).